The sequence spans 630 residues: Sodium-dependent serotonin transporter (630 aa).

The Cytoplasmic segment spans residues 1–87 (METTPLNSQK…ERETWGKKVD (87 aa)). Positions 31-59 (VPTPGDKVESGQISNGYSAVPSPGAGDDT) are disordered. Tyr47 carries the phosphotyrosine modification. The helical transmembrane segment at 88–112 (FLLSVIGYAVDLGNVWRFPYICYQN) threads the bilayer. 5 residues coordinate Na(+): Gly94, Ala96, Val97, Asp98, and Asn101. Asp98 serves as a coordination point for serotonin. Topologically, residues 113–115 (GGG) are extracellular. A helical transmembrane segment spans residues 116–135 (AFLIPYTIMAIFGGIPLFYM). At 136–160 (ELALGQYHRNGCISIWRKICPIFKG) the chain is on the cytoplasmic side. Position 142 is a phosphotyrosine (Tyr142). The chain crosses the membrane as a helical span at residues 161 to 186 (IGYAICIIAFYIASYYNTIMAWALYY). Residues 187-252 (LISSFTDQLP…KGLQDLGGIS (66 aa)) are Extracellular-facing. A disulfide bridge connects residues Cys200 and Cys209. N-linked (GlcNAc...) asparagine glycosylation is found at Asn208 and Asn217. Residues 253–271 (WQLALCIMLIFTVIYFSIW) traverse the membrane as a helical segment. Over 272 to 277 (KGVKTS) the chain is Cytoplasmic. Thr276 bears the Phosphothreonine mark. The chain crosses the membrane as a helical span at residues 278 to 297 (GKVVWVTATFPYIILSVLLV). Residues 298-324 (RGATLPGAWRGVLFYLKPNWQKLLETG) lie on the Extracellular side of the membrane. Residues 325 to 347 (VWIDAAAQIFFSLGPGFGVLLAF) form a helical membrane-spanning segment. Na(+) is bound at residue Ser336. Topologically, residues 348 to 360 (ASYNKFNNNCYQD) are cytoplasmic. The chain crosses the membrane as a helical span at residues 361 to 380 (ALVTSVVNCMTSFVSGFVIF). Asn368 lines the Na(+) pocket. The Extracellular segment spans residues 381-421 (TVLGYMAEMRNEDVSEVAKDAGPSLLFITYAEAIANMPAST). A helical membrane pass occupies residues 422–443 (FFAIIFFLMLITLGLDSTFAGL). Na(+) contacts are provided by Leu434, Asp437, and Ser438. Residue Thr439 coordinates serotonin. At 444-463 (EGVITAVLDEFPHIWAKRRE) the chain is on the cytoplasmic side. Residues 464 to 483 (WFVLAVVITCFFGSLVTLTF) form a helical membrane-spanning segment. Residues 484 to 494 (GGAYVVKLLEE) lie on the Extracellular side of the membrane. Serotonin contacts are provided by Glu494 and Tyr495. The chain crosses the membrane as a helical span at residues 495–516 (YATGPAVLTVALIEAVAVSWFY). Residues 517–538 (GITQFCRDVKEMLGFSPGWFWR) lie on the Cytoplasmic side of the membrane. A helical transmembrane segment spans residues 539–558 (ICWVAISPLFLLFIICSFLM). Serotonin contacts are provided by Phe556 and Ser559. Residues 559–574 (SPPQLRLFQYNYPHWS) lie on the Extracellular side of the membrane. The chain crosses the membrane as a helical span at residues 575 to 595 (IILGYCIGTSSFVCIPTYIAY). The Cytoplasmic segment spans residues 596 to 630 (RLISTPGTFKERIIKSITPETPTEIPCGDVRLNAV). Positions 616 to 624 (TPTEIPCGD) are interaction with RAB4A.

It belongs to the sodium:neurotransmitter symporter (SNF) (TC 2.A.22) family. SLC6A4 subfamily. Monomer or homooligomer. Interacts (via C-terminus) with SCAMP2; the interaction is direct and retains transporter molecules intracellularly. Interacts with filamentous actin and STX1A. Interacts (via the N-terminus) with STX1A (via the H3 domain); this interaction regulates SLC4A6 channel conductance. Interacts with SEC23A, SEC24C and PATJ. Interacts with NOS1; the interaction may diminish the cell surface localization of SERT in the brain and, correspondingly, reduce serotonin reuptake. Interacts with TGFB1I1. Interacts with ITGAV:ITGB3. Interacts (via C-terminus) with ITGB3; this interaction regulates SLC6A4 trafficking. In terms of processing, phosphorylation at Thr-276 increases 5-HT uptake and is required for cGMP-mediated SERT regulation.

It is found in the cell membrane. The protein resides in the endomembrane system. Its subcellular location is the endosome membrane. The protein localises to the synapse. It localises to the cell junction. It is found in the focal adhesion. The protein resides in the cell projection. Its subcellular location is the neuron projection. It carries out the reaction serotonin(out) + K(+)(in) + Na(+)(out) + H(+)(in) = serotonin(in) + K(+)(out) + Na(+)(in) + H(+)(out). Functionally, serotonin transporter that cotransports serotonin with one Na(+) ion in exchange for one K(+) ion and possibly one proton in an overall electroneutral transport cycle. Transports serotonin across the plasma membrane from the extracellular compartment to the cytosol thus limiting serotonin intercellular signaling. Essential for serotonin homeostasis in the central nervous system. In the developing somatosensory cortex, acts in glutamatergic neurons to control serotonin uptake and its trophic functions accounting for proper spatial organization of cortical neurons and elaboration of sensory circuits. In the mature cortex, acts primarily in brainstem raphe neurons to mediate serotonin uptake from the synaptic cleft back into the pre-synaptic terminal thus terminating serotonin signaling at the synapse. Modulates mucosal serotonin levels in the gastrointestinal tract through uptake and clearance of serotonin in enterocytes. Required for enteric neurogenesis and gastrointestinal reflexes. Regulates blood serotonin levels by ensuring rapid high affinity uptake of serotonin from plasma to platelets, where it is further stored in dense granules via vesicular monoamine transporters and then released upon stimulation. Mechanistically, the transport cycle starts with an outward-open conformation having Na1(+) and Cl(-) sites occupied. The binding of a second extracellular Na2(+) ion and serotonin substrate leads to structural changes to outward-occluded to inward-occluded to inward-open, where the Na2(+) ion and serotonin are released into the cytosol. Binding of intracellular K(+) ion induces conformational transitions to inward-occluded to outward-open and completes the cycle by releasing K(+) possibly together with a proton bound to Asp-98 into the extracellular compartment. Na1(+) and Cl(-) ions remain bound throughout the transport cycle. Additionally, displays serotonin-induced channel-like conductance for monovalent cations, mainly Na(+) ions. The channel activity is uncoupled from the transport cycle and may contribute to the membrane resting potential or excitability. The chain is Sodium-dependent serotonin transporter (SLC6A4) from Macaca mulatta (Rhesus macaque).